We begin with the raw amino-acid sequence, 55 residues long: Large ribosomal subunit protein bL33 (55 aa).

The protein belongs to the bacterial ribosomal protein bL33 family.

The sequence is that of Large ribosomal subunit protein bL33 from Bordetella pertussis (strain Tohama I / ATCC BAA-589 / NCTC 13251).